A 158-amino-acid polypeptide reads, in one-letter code: HVA22-like protein f (158 aa).

Helical transmembrane passes span 2–22 (GFII…VMLL), 41–61 (QQWL…LSVW), and 63–83 (VLAW…WLVL).

Belongs to the DP1 family.

Its subcellular location is the membrane. The polypeptide is HVA22-like protein f (HVA22F) (Arabidopsis thaliana (Mouse-ear cress)).